Reading from the N-terminus, the 461-residue chain is Protein FAM124B (461 aa).

Phosphoserine is present on serine 49. Residues 302–346 are disordered; sequence VELPEPGGRPVSDGSSNTWWKSAGGSAQPSSPATESQPQLSSLHL. A compositionally biased stretch (low complexity) spans 323 to 334; that stretch reads SAGGSAQPSSPA.

Belongs to the FAM124 family. In terms of assembly, interacts with CHD7 and CHD8.

It localises to the nucleus. The sequence is that of Protein FAM124B (FAM124B) from Bos taurus (Bovine).